The following is a 243-amino-acid chain: Zinc import ATP-binding protein ZnuC (243 aa).

The 216-residue stretch at 4–219 folds into the ABC transporter domain; that stretch reads ITVENLSVRY…PEYRALFGTG (216 aa). Position 36-43 (36-43) interacts with ATP; it reads GPNGSGKT.

This sequence belongs to the ABC transporter superfamily. Zinc importer (TC 3.A.1.15.5) family. In terms of assembly, the complex is composed of two ATP-binding proteins (ZnuC), two transmembrane proteins (ZnuB) and a solute-binding protein (ZnuA).

The protein resides in the cell inner membrane. It catalyses the reaction Zn(2+)(out) + ATP(in) + H2O(in) = Zn(2+)(in) + ADP(in) + phosphate(in) + H(+)(in). Its function is as follows. Part of the ABC transporter complex ZnuABC involved in zinc import. Responsible for energy coupling to the transport system. The sequence is that of Zinc import ATP-binding protein ZnuC from Jannaschia sp. (strain CCS1).